The chain runs to 216 residues: MKEARKRMVKRAVQEIKDGMNVNLGIGMPTLVANEIPDGVHVMLQSENGLLGIGPYPLEGTEDADLINAGKETITEVTGASYFDSAESFAMIRGGHIDLAILGGMEVSEQGDLANWMIPGKMVKGMGGAMDLVNGAKRIVVIMEHVNKHGESKVKKTCSLPLTGQKVVHRLITDLAVFDFVNGRMTLTELQDGVTIEEVYEKTEADFAVSQSVLNS.

E47 is an active-site residue.

The protein belongs to the 3-oxoacid CoA-transferase subunit B family. Heterodimer of a subunit A and a subunit B.

The catalysed reaction is a 3-oxo acid + succinyl-CoA = a 3-oxoacyl-CoA + succinate. The sequence is that of Probable succinyl-CoA:3-ketoacid coenzyme A transferase subunit B (scoB) from Bacillus subtilis (strain 168).